A 313-amino-acid polypeptide reads, in one-letter code: Porphobilinogen deaminase (313 aa).

The residue at position 241 (Cys241) is an S-(dipyrrolylmethanemethyl)cysteine.

The protein belongs to the HMBS family. As to quaternary structure, monomer. The cofactor is dipyrromethane.

The catalysed reaction is 4 porphobilinogen + H2O = hydroxymethylbilane + 4 NH4(+). Its pathway is porphyrin-containing compound metabolism; protoporphyrin-IX biosynthesis; coproporphyrinogen-III from 5-aminolevulinate: step 2/4. The protein operates within porphyrin-containing compound metabolism; chlorophyll biosynthesis. Tetrapolymerization of the monopyrrole PBG into the hydroxymethylbilane pre-uroporphyrinogen in several discrete steps. In Chlorobium limicola (strain DSM 245 / NBRC 103803 / 6330), this protein is Porphobilinogen deaminase.